Here is a 522-residue protein sequence, read N- to C-terminus: F-box only protein 7 (522 aa).

A ubiquitin-like region spans residues 1–88; sequence MRLRVRLLKR…QDDIPAPNIP (88 aa). The tract at residues 85-144 is disordered; that stretch reads PNIPSSTDSEHSSLQNNEQPSLATSSNQTSMQDEQPSDSFQGQAAQSGVWNDDSMLGPSQ. The span at 87–133 shows a compositional bias: polar residues; the sequence is IPSSTDSEHSSLQNNEQPSLATSSNQTSMQDEQPSDSFQGQAAQSGV. An important for interaction with PINK1 region spans residues 92 to 129; the sequence is DSEHSSLQNNEQPSLATSSNQTSMQDEQPSDSFQGQAA. The important for interaction with CDK6 stretch occupies residues 129 to 169; it reads AQSGVWNDDSMLGPSQNFEAESIQDNAHMAEGTGFYPSEPM. Residues 180–324 form an important for dimerization and interaction with PSMF1 region; it reads PHSLETLYQS…PLLAFTRQAL (145 aa). The region spanning 329-375 is the F-box domain; that stretch reads VFGLVVLPLELKLRIFRLLDVRSVLSLSAVCRDLFTASNDPLLWRFL. The interval 381 to 522 is important for interaction with CDK6; the sequence is RDNTVRVQDT…RPTDGRLSFM (142 aa). An omega-N-methylarginine mark is found at R432 and R451. Residues 481–484 carry the RFDP motif motif; it reads RFDP. The segment at 483–522 is disordered; the sequence is DPVGPLPGPNPILPGRGGPNDRFPFRPSRGRPTDGRLSFM. R518 carries the asymmetric dimethylarginine modification.

In terms of assembly, part of the SCF (SKP1-CUL1-F-box) E3 ubiquitin-protein ligase complex SCF(FBXO7) formed of CUL1, SKP1, RBX1 and FBXO7. Interacts via its C-terminal proline-rich region with DLGAP5. Interacts with BIRC2. Interacts with CDK6 and promotes its interaction with D-type cyclin. Interacts with PSMF1. Interacts (via the N-terminal Ubl domain) with PRKN. Interact (via N-terminal region) with PINK1. As to quaternary structure, interact (via N-terminal region) with PINK1.

It is found in the cytoplasm. The protein localises to the nucleus. It localises to the mitochondrion. The protein resides in the cytosol. Its pathway is protein modification; protein ubiquitination. Substrate recognition component of a SCF (SKP1-CUL1-F-box protein) E3 ubiquitin-protein ligase complex which mediates the ubiquitination and subsequent proteasomal degradation of target proteins and plays a role in several biological processes such as cell cycle, cell proliferation, or maintenance of chromosome stability. Recognizes and ubiquitinates BIRC2 and the cell cycle regulator DLGAP5. Plays a role downstream of PINK1 in the clearance of damaged mitochondria via selective autophagy (mitophagy) by targeting PRKN to dysfunctional depolarized mitochondria. Promotes MFN1 ubiquitination. Mediates the ubiquitination and proteasomal degradation of UXT isoform 2, thereby impairing the NF-kappa-B signaling pathway. Inhibits NF-kappa-B pathway also by promoting the ubiquitination of TRAF2. Affects the assembly state and activity of the proteasome in the cells including neurons by ubiquitinating the proteasomal subunit PSMA2 via 'Lys-63'-linked polyubiquitin chains. Promotes 'Lys-48'-linked polyubiquitination SIRT7, leading to the hydrogen peroxide-induced cell death. The protein is F-box only protein 7 (FBXO7) of Homo sapiens (Human).